The following is a 198-amino-acid chain: Segregation and condensation protein B (198 aa).

Positions 168-198 (KLADPATDEPDQNEMDLFFDRFNQSKEQEEE) are disordered.

The protein belongs to the ScpB family. Homodimer. Homodimerization may be required to stabilize the binding of ScpA to the Smc head domains. Component of a cohesin-like complex composed of ScpA, ScpB and the Smc homodimer, in which ScpA and ScpB bind to the head domain of Smc. The presence of the three proteins is required for the association of the complex with DNA.

Its subcellular location is the cytoplasm. Functionally, participates in chromosomal partition during cell division. May act via the formation of a condensin-like complex containing Smc and ScpA that pull DNA away from mid-cell into both cell halves. The protein is Segregation and condensation protein B of Listeria monocytogenes serotype 4b (strain CLIP80459).